The sequence spans 443 residues: Tol-Pal system protein TolB (443 aa).

An N-terminal signal peptide occupies residues 1–31; the sequence is MTRLAKGKWRSTLGAMMALAVMVAAIPQARA. Positions 423–432 are enriched in polar residues; that stretch reads NERQISTPTE. The segment at 423–443 is disordered; sequence NERQISTPTEASDPAWSPLLP.

This sequence belongs to the TolB family. As to quaternary structure, the Tol-Pal system is composed of five core proteins: the inner membrane proteins TolA, TolQ and TolR, the periplasmic protein TolB and the outer membrane protein Pal. They form a network linking the inner and outer membranes and the peptidoglycan layer.

It localises to the periplasm. Functionally, part of the Tol-Pal system, which plays a role in outer membrane invagination during cell division and is important for maintaining outer membrane integrity. The protein is Tol-Pal system protein TolB of Rhodospirillum rubrum (strain ATCC 11170 / ATH 1.1.1 / DSM 467 / LMG 4362 / NCIMB 8255 / S1).